The following is a 232-amino-acid chain: Ubiquinone biosynthesis O-methyltransferase (232 aa).

Residues arginine 36, glycine 55, aspartate 76, and leucine 120 each coordinate S-adenosyl-L-methionine.

This sequence belongs to the methyltransferase superfamily. UbiG/COQ3 family.

The catalysed reaction is a 3-demethylubiquinol + S-adenosyl-L-methionine = a ubiquinol + S-adenosyl-L-homocysteine + H(+). The enzyme catalyses a 3-(all-trans-polyprenyl)benzene-1,2-diol + S-adenosyl-L-methionine = a 2-methoxy-6-(all-trans-polyprenyl)phenol + S-adenosyl-L-homocysteine + H(+). It functions in the pathway cofactor biosynthesis; ubiquinone biosynthesis. Its function is as follows. O-methyltransferase that catalyzes the 2 O-methylation steps in the ubiquinone biosynthetic pathway. This is Ubiquinone biosynthesis O-methyltransferase from Pseudomonas putida (strain ATCC 700007 / DSM 6899 / JCM 31910 / BCRC 17059 / LMG 24140 / F1).